We begin with the raw amino-acid sequence, 131 residues long: Acidic leucine-rich nuclear phosphoprotein 32 family member D (131 aa).

LRR repeat units follow at residues 18–38 (DVKE…EGLT), 43–64 (ELEL…PKLN), 65–87 (KLKK…AEKC), 89–110 (NLIH…EPLK), and 114–131 (NLES…LNNY).

It belongs to the ANP32 family.

This Homo sapiens (Human) protein is Acidic leucine-rich nuclear phosphoprotein 32 family member D (ANP32D).